The following is a 100-amino-acid chain: Urease subunit gamma (100 aa).

Belongs to the urease gamma subunit family. Heterotrimer of UreA (gamma), UreB (beta) and UreC (alpha) subunits. Three heterotrimers associate to form the active enzyme.

Its subcellular location is the cytoplasm. It carries out the reaction urea + 2 H2O + H(+) = hydrogencarbonate + 2 NH4(+). It participates in nitrogen metabolism; urea degradation; CO(2) and NH(3) from urea (urease route): step 1/1. The protein is Urease subunit gamma of Prochlorococcus marinus subsp. pastoris (strain CCMP1986 / NIES-2087 / MED4).